Here is a 234-residue protein sequence, read N- to C-terminus: tRNA (guanine-N(1)-)-methyltransferase (234 aa).

Residues glycine 112 and 132–137 (IGDFIL) each bind S-adenosyl-L-methionine.

This sequence belongs to the RNA methyltransferase TrmD family. In terms of assembly, homodimer.

The protein resides in the cytoplasm. It catalyses the reaction guanosine(37) in tRNA + S-adenosyl-L-methionine = N(1)-methylguanosine(37) in tRNA + S-adenosyl-L-homocysteine + H(+). Functionally, specifically methylates guanosine-37 in various tRNAs. This chain is tRNA (guanine-N(1)-)-methyltransferase, found in Campylobacter jejuni (strain RM1221).